We begin with the raw amino-acid sequence, 420 residues long: Histidine--tRNA ligase (420 aa).

It belongs to the class-II aminoacyl-tRNA synthetase family. Homodimer.

It localises to the cytoplasm. The catalysed reaction is tRNA(His) + L-histidine + ATP = L-histidyl-tRNA(His) + AMP + diphosphate + H(+). The sequence is that of Histidine--tRNA ligase from Thermotoga petrophila (strain ATCC BAA-488 / DSM 13995 / JCM 10881 / RKU-1).